Here is a 265-residue protein sequence, read N- to C-terminus: Urease accessory protein UreH (265 aa).

It belongs to the UreD family. As to quaternary structure, ureH, UreF and UreG form a complex that acts as a GTP-hydrolysis-dependent molecular chaperone, activating the urease apoprotein by helping to assemble the nickel containing metallocenter of UreC. The UreE protein probably delivers the nickel.

The protein resides in the cytoplasm. Its function is as follows. Required for maturation of urease via the functional incorporation of the urease nickel metallocenter. This chain is Urease accessory protein UreH, found in Helicobacter pylori (strain G27).